The sequence spans 227 residues: Orotidine 5'-phosphate decarboxylase (227 aa).

Residues aspartate 12, lysine 34, 61 to 70, threonine 117, arginine 178, glutamine 187, glycine 207, and arginine 208 contribute to the substrate site; that span reads DLKLHDIPNT. Lysine 63 functions as the Proton donor in the catalytic mechanism.

The protein belongs to the OMP decarboxylase family. Type 1 subfamily. In terms of assembly, homodimer.

The catalysed reaction is orotidine 5'-phosphate + H(+) = UMP + CO2. It functions in the pathway pyrimidine metabolism; UMP biosynthesis via de novo pathway; UMP from orotate: step 2/2. Its function is as follows. Catalyzes the decarboxylation of orotidine 5'-monophosphate (OMP) to uridine 5'-monophosphate (UMP). This Anaeromyxobacter dehalogenans (strain 2CP-1 / ATCC BAA-258) protein is Orotidine 5'-phosphate decarboxylase.